Reading from the N-terminus, the 774-residue chain is C6 finger domain transcription factor nscR (774 aa).

The zn(2)-C6 fungal-type DNA-binding region spans 17–43; it reads CELCRERKIKCDKVDPCNNCVSAGVVC. 3 disordered regions span residues 61–94, 536–559, and 665–697; these read RPMSPTFVPPRAPTPVAGPVPSEKKQTDHSSGAV, LQLPQPSNGSSQPPSSPSPRPQEH, and PTFSLGSSTGTSAAPTPRSRASSTPSDTLSDLS. Over residues 67–78 the composition is skewed to pro residues; the sequence is FVPPRAPTPVAG. Low complexity predominate over residues 536 to 548; sequence LQLPQPSNGSSQP. Over residues 665-674 the composition is skewed to polar residues; the sequence is PTFSLGSSTG. A compositionally biased stretch (low complexity) spans 675–697; it reads TSAAPTPRSRASSTPSDTLSDLS.

Its subcellular location is the nucleus. Transcription factor that specifically regulates the neosartoricin biosynthesis gene cluster. The sequence is that of C6 finger domain transcription factor nscR from Aspergillus fumigatus (strain ATCC MYA-4609 / CBS 101355 / FGSC A1100 / Af293) (Neosartorya fumigata).